We begin with the raw amino-acid sequence, 95 residues long: Co-chaperonin GroES (95 aa).

The protein belongs to the GroES chaperonin family. As to quaternary structure, heptamer of 7 subunits arranged in a ring. Interacts with the chaperonin GroEL.

The protein localises to the cytoplasm. Its function is as follows. Together with the chaperonin GroEL, plays an essential role in assisting protein folding. The GroEL-GroES system forms a nano-cage that allows encapsulation of the non-native substrate proteins and provides a physical environment optimized to promote and accelerate protein folding. GroES binds to the apical surface of the GroEL ring, thereby capping the opening of the GroEL channel. This chain is Co-chaperonin GroES, found in Clostridium acetobutylicum (strain ATCC 824 / DSM 792 / JCM 1419 / IAM 19013 / LMG 5710 / NBRC 13948 / NRRL B-527 / VKM B-1787 / 2291 / W).